Here is a 374-residue protein sequence, read N- to C-terminus: Anhydro-N-acetylmuramic acid kinase (374 aa).

An ATP-binding site is contributed by 12-19; the sequence is GTSLDGVD.

Belongs to the anhydro-N-acetylmuramic acid kinase family.

The enzyme catalyses 1,6-anhydro-N-acetyl-beta-muramate + ATP + H2O = N-acetyl-D-muramate 6-phosphate + ADP + H(+). Its pathway is amino-sugar metabolism; 1,6-anhydro-N-acetylmuramate degradation. It functions in the pathway cell wall biogenesis; peptidoglycan recycling. Its function is as follows. Catalyzes the specific phosphorylation of 1,6-anhydro-N-acetylmuramic acid (anhMurNAc) with the simultaneous cleavage of the 1,6-anhydro ring, generating MurNAc-6-P. Is required for the utilization of anhMurNAc either imported from the medium or derived from its own cell wall murein, and thus plays a role in cell wall recycling. The sequence is that of Anhydro-N-acetylmuramic acid kinase from Salmonella arizonae (strain ATCC BAA-731 / CDC346-86 / RSK2980).